We begin with the raw amino-acid sequence, 163 residues long: MQSVDSMLGTVGGCGGGEAASTFSKDPSGCCVGNDCRDGGRGLERRHGRWSRGEGGESGLCSGGQMASEIEYWDGLAISVMEVEKAFGSTNVLWKTEPFSLWACTAACPPSLSPTLLALGLPRDGKELAEQGSLWTVLEPGGDWSHSQSQLGTPGRGKGALGF.

The disordered stretch occupies residues W144–F163. A compositionally biased stretch (gly residues) spans P154–F163.

This is an uncharacterized protein from Homo sapiens (Human).